The chain runs to 688 residues: DNA ligase (688 aa).

Residues 42-46 (DAEYD), 91-92 (SL), and Glu-128 each bind NAD(+). The active-site N6-AMP-lysine intermediate is Lys-130. NAD(+) contacts are provided by Arg-151, Glu-188, Lys-305, and Lys-329. Zn(2+) contacts are provided by Cys-423, Cys-426, Cys-441, and Cys-447. One can recognise a BRCT domain in the interval 608–688 (APQGVLAGKT…GMRKLLEGQL (81 aa)).

Belongs to the NAD-dependent DNA ligase family. LigA subfamily. Mg(2+) serves as cofactor. It depends on Mn(2+) as a cofactor.

It carries out the reaction NAD(+) + (deoxyribonucleotide)n-3'-hydroxyl + 5'-phospho-(deoxyribonucleotide)m = (deoxyribonucleotide)n+m + AMP + beta-nicotinamide D-nucleotide.. Functionally, DNA ligase that catalyzes the formation of phosphodiester linkages between 5'-phosphoryl and 3'-hydroxyl groups in double-stranded DNA using NAD as a coenzyme and as the energy source for the reaction. It is essential for DNA replication and repair of damaged DNA. The protein is DNA ligase of Paraburkholderia phytofirmans (strain DSM 17436 / LMG 22146 / PsJN) (Burkholderia phytofirmans).